Reading from the N-terminus, the 310-residue chain is N-acetyl-gamma-glutamyl-phosphate reductase (310 aa).

C116 is an active-site residue.

The protein belongs to the NAGSA dehydrogenase family. Type 2 subfamily.

The protein resides in the cytoplasm. The catalysed reaction is N-acetyl-L-glutamate 5-semialdehyde + phosphate + NADP(+) = N-acetyl-L-glutamyl 5-phosphate + NADPH + H(+). It functions in the pathway amino-acid biosynthesis; L-arginine biosynthesis; N(2)-acetyl-L-ornithine from L-glutamate: step 3/4. Catalyzes the NADPH-dependent reduction of N-acetyl-5-glutamyl phosphate to yield N-acetyl-L-glutamate 5-semialdehyde. The polypeptide is N-acetyl-gamma-glutamyl-phosphate reductase (Chelativorans sp. (strain BNC1)).